The chain runs to 125 residues: Snaclec coagulation factor IX/factor X-binding protein subunit B (125 aa).

The C-type lectin domain maps to D1–S122. 3 disulfides stabilise this stretch: C2–C13, C30–C120, and C97–C112. S41 and E47 together coordinate Ca(2+).

It belongs to the snaclec family. Heterodimer of subunits A and B; disulfide-linked. In terms of tissue distribution, expressed by the venom gland.

It localises to the secreted. Anticoagulant protein which binds to coagulation factor IX (F9) and coagulation factor X (F10) in the presence of calcium. It may bind the gamma-carboxyglutamic acid-domain regions of factors with a 1 to 1 stoichiometry. The dissociation constant (K(d)) are 6.6 nM for factor IX (F9) and 125 nM for factor X (F10). Does not bind carbohydrates. This chain is Snaclec coagulation factor IX/factor X-binding protein subunit B, found in Echis carinatus (Saw-scaled viper).